A 96-amino-acid chain; its full sequence is ATP-dependent Clp protease adapter protein ClpS (96 aa).

Belongs to the ClpS family. As to quaternary structure, binds to the N-terminal domain of the chaperone ClpA.

Functionally, involved in the modulation of the specificity of the ClpAP-mediated ATP-dependent protein degradation. The protein is ATP-dependent Clp protease adapter protein ClpS of Streptomyces coelicolor (strain ATCC BAA-471 / A3(2) / M145).